We begin with the raw amino-acid sequence, 432 residues long: Adenylosuccinate synthetase (432 aa).

GTP-binding positions include 12-18 (GDEGKGK) and 40-42 (GHT). The active-site Proton acceptor is the aspartate 13. Aspartate 13 and glycine 40 together coordinate Mg(2+). Residues 13 to 16 (DEGK), 38 to 41 (NAGH), threonine 129, arginine 143, glutamine 224, threonine 239, and arginine 303 contribute to the IMP site. Residue histidine 41 is the Proton donor of the active site. Position 299-305 (299-305 (VTTGRRR)) interacts with substrate. Residues arginine 305, 331–333 (KLD), and 413–415 (GVG) each bind GTP.

This sequence belongs to the adenylosuccinate synthetase family. In terms of assembly, homodimer. It depends on Mg(2+) as a cofactor.

Its subcellular location is the cytoplasm. It catalyses the reaction IMP + L-aspartate + GTP = N(6)-(1,2-dicarboxyethyl)-AMP + GDP + phosphate + 2 H(+). It functions in the pathway purine metabolism; AMP biosynthesis via de novo pathway; AMP from IMP: step 1/2. Functionally, plays an important role in the de novo pathway of purine nucleotide biosynthesis. Catalyzes the first committed step in the biosynthesis of AMP from IMP. The protein is Adenylosuccinate synthetase of Mycobacterium leprae (strain TN).